A 501-amino-acid polypeptide reads, in one-letter code: Putative matrix metalloproteinase (501 aa).

The signal sequence occupies residues 1–26 (MMPQYERKQIIIHISCVIICVVVTLT). Residues N48, N58, N61, N94, N116, and N163 are each glycosylated (N-linked (GlcNAc...) asparagine; by host). H179 is a Zn(2+) binding site. The active site involves E180. Zn(2+) is bound by residues H183 and H189. Residues N192, N267, N280, and N291 are each glycosylated (N-linked (GlcNAc...) asparagine; by host). The Hemopexin repeat unit spans residues 311–356 (TGHIDTISVIRGELYIFVDEYHWRFRSNGLLYSGYPLKTTHSWSVP). Residues N379 and N493 are each glycosylated (N-linked (GlcNAc...) asparagine; by host).

This sequence belongs to the peptidase M10A family. It depends on Zn(2+) as a cofactor.

This is Putative matrix metalloproteinase from Trichoplusia ni ascovirus 2c (TnAV-2c).